A 105-amino-acid polypeptide reads, in one-letter code: Antitoxin YafW (105 aa).

It belongs to the CbeA/YafW/YfjZ antitoxin family.

Its function is as follows. Antitoxin component of a type IV toxin-antitoxin (TA) system. Antitoxin that counteracts the effect of cognate toxin YkfI. It does not seem to bind to the cognate toxin but instead induces toxin loss by an unknown mechanism. Co-overexpression of toxin YkfI and antitoxin YafW leads to formation of elongated cells. In Escherichia coli (strain K12), this protein is Antitoxin YafW (yafW).